The primary structure comprises 325 residues: Beta-ketoacyl-[acyl-carrier-protein] synthase III (325 aa).

Active-site residues include C119 and H252. Positions 253-257 are ACP-binding; sequence QANLR. Residue N282 is part of the active site.

This sequence belongs to the thiolase-like superfamily. FabH family. As to quaternary structure, homodimer.

The protein localises to the cytoplasm. The catalysed reaction is malonyl-[ACP] + acetyl-CoA + H(+) = 3-oxobutanoyl-[ACP] + CO2 + CoA. It functions in the pathway lipid metabolism; fatty acid biosynthesis. Catalyzes the condensation reaction of fatty acid synthesis by the addition to an acyl acceptor of two carbons from malonyl-ACP. Catalyzes the first condensation reaction which initiates fatty acid synthesis and may therefore play a role in governing the total rate of fatty acid production. Possesses both acetoacetyl-ACP synthase and acetyl transacylase activities. Its substrate specificity determines the biosynthesis of branched-chain and/or straight-chain of fatty acids. The protein is Beta-ketoacyl-[acyl-carrier-protein] synthase III of Polaromonas naphthalenivorans (strain CJ2).